The following is a 240-amino-acid chain: uncharacterized protein (240 aa).

2 disordered regions span residues Arg125–Asp148 and Asp177–Arg240. A compositionally biased stretch (acidic residues) spans Ser130 to Asp148. Positions Ser192–Val203 are enriched in basic and acidic residues. Residues Ile204–Glu217 show a composition bias toward acidic residues. Ser231 carries the post-translational modification Phosphoserine.

It belongs to the UTP5 family.

Its subcellular location is the cytoplasm. It is found in the nucleus. This is an uncharacterized protein from Schizosaccharomyces pombe (strain 972 / ATCC 24843) (Fission yeast).